The primary structure comprises 293 residues: Probable metal transport system membrane protein CPn_0543/CP_0209/CPj0543/CpB0565 (293 aa).

7 helical membrane-spanning segments follow: residues 12-32 (LLIL…GGVM), 41-61 (IVSI…LTLW), 68-88 (LSFF…LCIG), 101-121 (LIAM…SRLP), 140-160 (PSDL…VVLC), 183-203 (LWYF…IYVM), and 253-273 (FPVG…SLCV).

It belongs to the ABC-3 integral membrane protein family.

Its subcellular location is the cell inner membrane. Part of an ATP-driven transport system CPn_0541/CPn_0542/CPn_0543 for a metal. This chain is Probable metal transport system membrane protein CPn_0543/CP_0209/CPj0543/CpB0565, found in Chlamydia pneumoniae (Chlamydophila pneumoniae).